A 156-amino-acid chain; its full sequence is MPATRNQDELVRTFKAILKEERFGSQSEIVNALQAEGFGNINQSKVSRMLSKFGAVRTRNAKQEMVYCLPAELGVPTAGSPVKNLVLDVDHNQAMIVVRTSPGAAQLIARLLDSIGKPEGILGTIAGDDTIFICPASIKTIDETLETVRSLFNYSE.

It belongs to the ArgR family.

The protein resides in the cytoplasm. It functions in the pathway amino-acid biosynthesis; L-arginine biosynthesis [regulation]. Regulates arginine biosynthesis genes. The protein is Arginine repressor of Shewanella frigidimarina (strain NCIMB 400).